We begin with the raw amino-acid sequence, 685 residues long: Polyphosphate kinase (685 aa).

Asn-45 contributes to the ATP binding site. Residues Arg-375 and Arg-405 each contribute to the Mg(2+) site. The active-site Phosphohistidine intermediate is the His-435. Positions 468, 564, and 592 each coordinate ATP.

It belongs to the polyphosphate kinase 1 (PPK1) family. Mg(2+) is required as a cofactor. Post-translationally, an intermediate of this reaction is the autophosphorylated ppk in which a phosphate is covalently linked to a histidine residue through a N-P bond.

It carries out the reaction [phosphate](n) + ATP = [phosphate](n+1) + ADP. Catalyzes the reversible transfer of the terminal phosphate of ATP to form a long-chain polyphosphate (polyP). The polypeptide is Polyphosphate kinase (Neisseria meningitidis serogroup B (strain ATCC BAA-335 / MC58)).